A 465-amino-acid chain; its full sequence is Macrophage metalloelastase (465 aa).

An N-terminal signal peptide occupies residues 1 to 21 (MKFLLVLVLLVSLQVSACGAA). The propeptide at 22 to 101 (PMNESEFAEW…DVQHLRAVPQ (80 aa)) is activation peptide. A Cysteine switch motif is present at residues 86 to 93 (SRCGVPDV). Cys88 lines the Zn(2+) pocket. Residues Asp120 and Asp154 each coordinate Ca(2+). Zn(2+) contacts are provided by His164 and Asp166. Residues Asp171, Gly172, Gly174, and Thr176 each coordinate Ca(2+). His179 lines the Zn(2+) pocket. Residues Gly186 and Asp190 each contribute to the Ca(2+) site. His192 is a Zn(2+) binding site. Residues Asp194, Glu195, and Glu197 each coordinate Ca(2+). His214 provides a ligand contact to Zn(2+). Glu215 is a catalytic residue. Zn(2+) contacts are provided by His218 and His224. A disulfide bond links Cys278 and Cys465. Hemopexin repeat units lie at residues 281–324 (SLSF…WPTI), 325–371 (PSGI…GFPA), 373–421 (VKKI…FPGI), and 422–465 (RPKI…WFGC). Asp285 contacts Ca(2+). A glycan (N-linked (GlcNAc...) asparagine) is linked at Asn313. Residues Asp377 and Asp426 each coordinate Ca(2+).

This sequence belongs to the peptidase M10A family. It depends on Ca(2+) as a cofactor. Zn(2+) serves as cofactor.

It localises to the secreted. The protein localises to the extracellular space. The protein resides in the extracellular matrix. The enzyme catalyses Hydrolysis of soluble and insoluble elastin. Specific cleavages are also produced at 14-Ala-|-Leu-15 and 16-Tyr-|-Leu-17 in the B chain of insulin.. Its function is as follows. May be involved in tissue injury and remodeling. Has significant elastolytic activity. Can accept large and small amino acids at the P1' site, but has a preference for leucine. Aromatic or hydrophobic residues are preferred at the P1 site, with small hydrophobic residues (preferably alanine) occupying P3. The chain is Macrophage metalloelastase (Mmp12) from Rattus norvegicus (Rat).